Consider the following 570-residue polypeptide: High-affinity hexose transporter HXT7 (570 aa).

Topologically, residues 1-60 (MSQDAAIAEQTPVEHLSAVDSASHSVLSTPSNKAERDEIKAYGEGEEHEPVVEIPKRPAS) are cytoplasmic. A helical transmembrane segment spans residues 61 to 81 (AYVTVSIMCIMIAFGGFVFGW). Over 82–116 (DTGTISGFINQTDFIRRFGMKHKDGTNYLSKVRTG) the chain is Extracellular. Asparagine 91 carries an N-linked (GlcNAc...) asparagine glycan. A helical transmembrane segment spans residues 117–137 (LIVSIFNIGCAIGGIILSKLG). Residues 138–143 (DMYGRK) lie on the Cytoplasmic side of the membrane. Residues 144–164 (VGLIVVVVIYIIGIIIQIASI) traverse the membrane as a helical segment. Residues 165-174 (NKWYQYFIGR) lie on the Extracellular side of the membrane. A helical transmembrane segment spans residues 175 to 195 (IISGLGVGGIAVLSPMLISEV). Over 196-201 (SPKHLR) the chain is Cytoplasmic. A helical membrane pass occupies residues 202 to 222 (GTLVSCYQLMITAGIFLGYCT). Topologically, residues 223-236 (NFGTKNYSNSVQWR) are extracellular. Asparagine 228 carries an N-linked (GlcNAc...) asparagine glycan. Residues 237-257 (VPLGLCFAWALFMIGGMTFVP) form a helical membrane-spanning segment. Topologically, residues 258 to 340 (ESPRYLAEVG…IQSLQQLTGD (83 aa)) are cytoplasmic. Residues 341–357 (NYFFYYGTTIFKAVGLS) traverse the membrane as a helical segment. The Extracellular portion of the chain corresponds to 358-363 (DSFETS). A helical transmembrane segment spans residues 364 to 381 (IVLGIVNFASTFVGIYVV). Residues 382-388 (ERYGRRT) lie on the Cytoplasmic side of the membrane. Residues 389–409 (CLLWGAASMTACMVVYASVGV) traverse the membrane as a helical segment. Residues 410–431 (TRLWPNGQDQPSSKGAGNCMIV) lie on the Extracellular side of the membrane. The helical transmembrane segment at 432–452 (FACFYIFCFATTWAPIPYVVV) threads the bilayer. Over 453 to 469 (SETFPLRVKSKAMSIAT) the chain is Cytoplasmic. The chain crosses the membrane as a helical span at residues 470–490 (AANWLWGFLIGFFTPFITGAI). Residue asparagine 491 is a topological domain, extracellular. Residues 492–512 (FYYGYVFMGCLVFMFFYVLLV) traverse the membrane as a helical segment. The Cytoplasmic portion of the chain corresponds to 513–570 (VPETKGLTLEEVNTMWEEGVLPWKSASWVPPSRRGANYDAEEMTHDDKPLYKRMFSTK). Threonine 556 carries the post-translational modification Phosphothreonine. Residue lysine 560 forms a Glycyl lysine isopeptide (Lys-Gly) (interchain with G-Cter in ubiquitin) linkage.

It belongs to the major facilitator superfamily. Sugar transporter (TC 2.A.1.1) family.

Its subcellular location is the membrane. High-affinity glucose transporter. In Saccharomyces cerevisiae (strain ATCC 204508 / S288c) (Baker's yeast), this protein is High-affinity hexose transporter HXT7 (HXT7).